The following is a 548-amino-acid chain: Probable malate:quinone oxidoreductase (548 aa).

The disordered stretch occupies residues Asp521–Leu548. Residues Pro530–Lys541 are compositionally biased toward low complexity.

This sequence belongs to the MQO family. The cofactor is FAD.

It carries out the reaction (S)-malate + a quinone = a quinol + oxaloacetate. The protein operates within carbohydrate metabolism; tricarboxylic acid cycle; oxaloacetate from (S)-malate (quinone route): step 1/1. The polypeptide is Probable malate:quinone oxidoreductase (Shigella boydii serotype 4 (strain Sb227)).